We begin with the raw amino-acid sequence, 468 residues long: Glutamate--tRNA ligase (468 aa).

The 'HIGH' region signature appears at 12–22 (PSPTGFIHLGN). The short motif at 244 to 248 (KMSKR) is the 'KMSKS' region element. ATP is bound at residue K247.

It belongs to the class-I aminoacyl-tRNA synthetase family. Glutamate--tRNA ligase type 1 subfamily. Monomer.

The protein resides in the cytoplasm. The catalysed reaction is tRNA(Glu) + L-glutamate + ATP = L-glutamyl-tRNA(Glu) + AMP + diphosphate. Functionally, catalyzes the attachment of glutamate to tRNA(Glu) in a two-step reaction: glutamate is first activated by ATP to form Glu-AMP and then transferred to the acceptor end of tRNA(Glu). The sequence is that of Glutamate--tRNA ligase from Polynucleobacter necessarius subsp. necessarius (strain STIR1).